The chain runs to 380 residues: TPR repeat-containing thioredoxin TDX (380 aa).

An N-acetylvaline modification is found at Val-2. A compositionally biased stretch (basic and acidic residues) spans 49–59 (TERDYEDKAET). The tract at residues 49–115 (TERDYEDKAE…DENRDDAQSE (67 aa)) is disordered. Residues 69-91 (DDDDDIMESDVELDNSDVVEPDN) are compositionally biased toward acidic residues. Basic and acidic residues predominate over residues 106-115 (DENRDDAQSE). 3 TPR repeats span residues 112–145 (AQSE…NPTS), 147–179 (ILYA…NSDS), and 181–213 (KGYK…DYDE). The span at 240 to 263 (RKEKELQRAERERRKQQEAQEREA) shows a compositional bias: basic and acidic residues. Positions 240–265 (RKEKELQRAERERRKQQEAQEREAQA) are disordered. The region spanning 252 to 378 (RRKQQEAQER…LEQKIAQHSS (127 aa)) is the Thioredoxin domain. Catalysis depends on nucleophile residues Cys-304 and Cys-307. Cys-304 and Cys-307 are oxidised to a cystine.

The protein belongs to the thioredoxin family. Oligomerization under high temperature.

Its function is as follows. Thiol-disulfide oxidoreductase that possesses insulin disulfide bonds reducing activity, disulfide reductase, foldase chaperone and holdase chaperone activities. Heat shock causes oligomerization and formation of high molecular weiht (HMW) complexes with concomitant functional switching from a disulfide reductase and foldase chaperone to a holdase chaperone. May interact with HSP70 proteins through the TPR repeats. The sequence is that of TPR repeat-containing thioredoxin TDX (TDX) from Arabidopsis thaliana (Mouse-ear cress).